A 372-amino-acid polypeptide reads, in one-letter code: GDP-mannose 4,6 dehydratase (372 aa).

The disordered stretch occupies residues 1-20 (MAHAPARCPSARGSGDGEMG). A2 bears the N-acetylalanine mark. NADP(+) contacts are provided by residues 30–35 (GITGQD), 55–58 (RRSS), 86–87 (DL), 108–112 (LGAQS), and Y123. Residue T155 is part of the active site. Active-site nucleophile residues include E157 and Y179. The NADP(+) site is built by K183, H209, and R214. Phosphotyrosine is present on Y323.

Belongs to the NAD(P)-dependent epimerase/dehydratase family. GDP-mannose 4,6-dehydratase subfamily. NADP(+) serves as cofactor. In terms of tissue distribution, highly expressed in pancreas and small intestine. Expressed in thymus, protstate, colon, heart, placenta, liver and kidney. Expressed at low levels in spleen, testis, brain and lung.

It catalyses the reaction GDP-alpha-D-mannose = GDP-4-dehydro-alpha-D-rhamnose + H2O. The protein operates within nucleotide-sugar biosynthesis; GDP-L-fucose biosynthesis via de novo pathway; GDP-L-fucose from GDP-alpha-D-mannose: step 1/2. Inhibited by GDP-fucose. Catalyzes the conversion of GDP-D-mannose to GDP-4-dehydro-6-deoxy-D-mannose. This chain is GDP-mannose 4,6 dehydratase, found in Homo sapiens (Human).